The sequence spans 334 residues: Cysteine and histidine-rich domain-containing protein 1 (334 aa).

Positions 5, 10, 24, 27, 42, 43, 59, 64, 156, 161, 175, 178, 193, 194, 210, and 215 each coordinate Zn(2+). 2 CHORD domains span residues Cys-5–His-64 and Cys-156–His-215. Positions Val-226 to Glu-315 constitute a CS domain.

Regulates centrosome duplication. This chain is Cysteine and histidine-rich domain-containing protein 1 (chordc1), found in Xenopus laevis (African clawed frog).